A 394-amino-acid chain; its full sequence is MYYQNQHQGKNILSSSRMHITSERHPFLRGNSPGDSGLILSTDAKPRLKWTPDLHERFIEAVNQLGGADKATPKTIMKVMGIPGLTLYHLKSHLQKYRLSKNLNGQANNSFNKIGIMTMMEEKTPDADEIQSENLSIGPQPNKNSPIGEALQMQIEVQRRLHEQLEVQRHLQLRIEAQGKYLQSVLEKAQETLGRQNLGAAGIEAAKVQLSELVSKVSAEYPNSSFLEPKELQNLCSQQMQTNYPPDCSLESCLTSSEGTQKNSKMLENNRLGLRTYIGDSTSEQKEIMEEPLFQRMELTWTEGLRGNPYLSTMVSEAEQRISYSERSPGRLSIGVGLHGHKSQHQQGNNEDHKLETRNRKGMDSTTELDLNTHVENYCTTRTKQFDLNGFSWN.

The 61-residue stretch at 42-102 (TDAKPRLKWT…HLQKYRLSKN (61 aa)) folds into the HTH myb-type domain. Residues 73-98 (PKTIMKVMGIPGLTLYHLKSHLQKYR) constitute a DNA-binding region (H-T-H motif). The coiled coil stretch occupies residues 148 to 168 (GEALQMQIEVQRRLHEQLEVQ). Residues 161–166 (LHEQLE) carry the LHEQLE motif. The tract at residues 338–363 (LHGHKSQHQQGNNEDHKLETRNRKGM) is disordered. Residues 350-363 (NEDHKLETRNRKGM) are compositionally biased toward basic and acidic residues.

This sequence belongs to the MYB-CC family. In terms of assembly, isoform 1: Homodimer. Isoform 3: Does not form homodimer. Expressed in phloem and/or cambium.

It is found in the nucleus. Its function is as follows. Transcriptional activator that may activate the transcription of specific genes involved in nitrogen uptake or assimilation. Acts redundantly with MYR1 as a repressor of flowering and organ elongation under decreased light intensity. Represses gibberellic acid (GA)-dependent responses and affects levels of bioactive GA. The chain is Myb-related protein 2 from Arabidopsis thaliana (Mouse-ear cress).